The sequence spans 491 residues: FAD-dependent monooxygenase cle3 (491 aa).

Glu-55, Gly-69, Arg-128, Asp-330, and Ala-343 together coordinate FAD. The N-linked (GlcNAc...) asparagine glycan is linked to Asn-380. Residues 462-482 (STVVWTSLGILGLVVFLFLLF) form a helical membrane-spanning segment.

It belongs to the paxM FAD-dependent monooxygenase family. Requires FAD as cofactor.

The protein localises to the membrane. It participates in secondary metabolite biosynthesis; terpenoid biosynthesis. In terms of biological role, FAD-dependent monooxygenase; part of the cluster A that mediates the biosynthesis of chevalone E and its oxidized derivatives that possess a unique five-membered lactone ring and can synergistically enhance the cytotoxicity of doxorubicin (DOX) in breast cancer cells. Within the pathway, cle3 takes part to the biosynthesis of the molecular scaffold by catalyzing the formation of an (S)-epoxide ring at the terminal olefin of the geranylgeranyl group. The molecular scaffold is commonly biosynthesized by a series of enzymes including the non-reducing polyketide synthase (NR-PKS) cle1 that produces the alpha-pyrone triacetic acid lactone (TAL); The membrane-bound prenyltransferase cle5 that accepts TAL as its substrate to perform a C-3 geranylgeranylation reaction, in which the pathway-dedicated GGPS cle6 is required to provide GGPP, the other substrate of cle5; the FAD-dependent monooxygenase Cle3 that forms an (S)-epoxide ring at the terminal olefin of the geranylgeranyl group; and the terpene cyclase Cle7 that catalyzes the cyclization of the prenyl group that yields the pentacyclic pathway intermediate chevalone E. Chevalone E can derivatize into seven new oxidized analogs by the cytochrome P450 monooxygenases cle2 (acting at C-20) and cle4 (acting at C-11 and C-12). The protein is FAD-dependent monooxygenase cle3 of Aspergillus versicolor.